The following is a 332-amino-acid chain: 6-phosphogluconolactonase (332 aa).

It belongs to the cycloisomerase 2 family.

It catalyses the reaction 6-phospho-D-glucono-1,5-lactone + H2O = 6-phospho-D-gluconate + H(+). Its pathway is carbohydrate degradation; pentose phosphate pathway; D-ribulose 5-phosphate from D-glucose 6-phosphate (oxidative stage): step 2/3. Catalyzes the hydrolysis of 6-phosphogluconolactone to 6-phosphogluconate. The polypeptide is 6-phosphogluconolactonase (Pectobacterium carotovorum subsp. carotovorum (strain PC1)).